We begin with the raw amino-acid sequence, 360 residues long: Protein Wnt-2 (360 aa).

Positions Met1–Ser25 are cleaved as a signal peptide. Cystine bridges form between Cys76-Cys87, Cys127-Cys135, Cys137-Cys157, Cys206-Cys220, Cys208-Cys215, Cys278-Cys309, Cys294-Cys304, Cys308-Cys348, Cys324-Cys339, Cys326-Cys336, and Cys331-Cys332. A lipid anchor (O-palmitoleoyl serine; by PORCN) is attached at Ser212. Asn295 is a glycosylation site (N-linked (GlcNAc...) asparagine).

It belongs to the Wnt family. Post-translationally, palmitoleoylation is required for efficient binding to frizzled receptors. Depalmitoleoylation leads to Wnt signaling pathway inhibition.

The protein resides in the secreted. Its subcellular location is the extracellular space. It localises to the extracellular matrix. In terms of biological role, ligand for members of the frizzled family of seven transmembrane receptors. Probable developmental protein. May be a signaling molecule which affects the development of discrete regions of tissues. Is likely to signal over only few cell diameters. This Muntiacus muntjak (Barking deer) protein is Protein Wnt-2 (WNT2).